The primary structure comprises 895 residues: Putative endoplasmic reticulum metallopeptidase 1-A (895 aa).

A disordered region spans residues M1–R30. The Cytoplasmic portion of the chain corresponds to M1–S34. A compositionally biased stretch (basic and acidic residues) spans E10–R30. A helical membrane pass occupies residues I35–V55. The Lumenal portion of the chain corresponds to A56–S383. Residues H174 and D186 each coordinate Zn(2+). Residue E220 is the Proton acceptor of the active site. The Zn(2+) site is built by E221, E247, and H323. Residues V384–L404 traverse the membrane as a helical segment. The Cytoplasmic portion of the chain corresponds to R405–H423. The helical transmembrane segment at V424–M444 threads the bilayer. Residues D445 to K452 lie on the Lumenal side of the membrane. The chain crosses the membrane as a helical span at residues M453 to H473. Residues S474–T492 lie on the Cytoplasmic side of the membrane. The helical transmembrane segment at I493–F513 threads the bilayer. Over Y514–N517 the chain is Lumenal. Residues N518–I538 form a helical membrane-spanning segment. At R539–R544 the chain is on the cytoplasmic side. The chain crosses the membrane as a helical span at residues V545–I565. Topologically, residues S566–E586 are lumenal. A helical transmembrane segment spans residues F587 to L607. The Cytoplasmic segment spans residues F608–R613. The helical transmembrane segment at M614–T634 threads the bilayer. At T635–F895 the chain is on the lumenal side. Residues N659, N702, and N758 are each glycosylated (N-linked (GlcNAc...) asparagine).

The protein belongs to the peptidase M28 family. Requires Zn(2+) as cofactor.

Its subcellular location is the endoplasmic reticulum membrane. The chain is Putative endoplasmic reticulum metallopeptidase 1-A from Caenorhabditis elegans.